The following is a 188-amino-acid chain: UPF0488 protein C8orf33 homolog (188 aa).

Disordered regions lie at residues 1–65 (MAAP…AEAQ), 87–112 (QRPTPKQKEQALGAIRTLRSQRTPLP), and 144–182 (AHSAQVQPVGEAARKKSRRVCRPRPEGRSKGTSDTRDEE). Ala2 is subject to N-acetylalanine. At Ser41 the chain carries Phosphoserine. A compositionally biased stretch (basic and acidic residues) spans 166 to 182 (PRPEGRSKGTSDTRDEE).

This sequence belongs to the UPF0488 family.

This is UPF0488 protein C8orf33 homolog from Bos taurus (Bovine).